A 526-amino-acid chain; its full sequence is GMP synthase [glutamine-hydrolyzing] (526 aa).

One can recognise a Glutamine amidotransferase type-1 domain in the interval 3–199 (RVAIIDFGSQ…FVRIAGCDNN (197 aa)). Cys83 serves as the catalytic Nucleophile. Active-site residues include His174 and Glu176. In terms of domain architecture, GMPS ATP-PPase spans 200–392 (WTVESFLDEQ…LGISDEILMR (193 aa)). 227 to 233 (SGGVDSS) provides a ligand contact to ATP.

Homodimer.

It catalyses the reaction XMP + L-glutamine + ATP + H2O = GMP + L-glutamate + AMP + diphosphate + 2 H(+). It participates in purine metabolism; GMP biosynthesis; GMP from XMP (L-Gln route): step 1/1. Catalyzes the synthesis of GMP from XMP. This is GMP synthase [glutamine-hydrolyzing] from Ehrlichia chaffeensis (strain ATCC CRL-10679 / Arkansas).